Here is a 407-residue protein sequence, read N- to C-terminus: tRNA (uracil(54)-C(5))-methyltransferase (407 aa).

Residues Cys61, Cys67, Cys70, and Cys137 each coordinate [4Fe-4S] cluster. S-adenosyl-L-methionine is bound by residues Gln253, Tyr279, Thr284, 300-301 (DS), Asp327, and Asp341. Catalysis depends on Cys368, which acts as the Nucleophile. The Proton acceptor role is filled by Glu400.

The protein belongs to the class I-like SAM-binding methyltransferase superfamily. RNA M5U methyltransferase family.

The enzyme catalyses uridine(54) in tRNA + S-adenosyl-L-methionine = 5-methyluridine(54) in tRNA + S-adenosyl-L-homocysteine + H(+). Functionally, catalyzes the formation of 5-methyl-uridine at position 54 (m5U54) in tRNA. The chain is tRNA (uracil(54)-C(5))-methyltransferase from Pyrococcus horikoshii (strain ATCC 700860 / DSM 12428 / JCM 9974 / NBRC 100139 / OT-3).